The following is a 224-amino-acid chain: MSLSNSLGLLGRKVGMMRLFTDDGDAVPVTVVDVSNNRVTQVKTQENDGYVSLQVTFGSRKASRVTKPEAGHLAKAGVEAGEIIREFRVTPEVAGKYAAGAAVPVADVFAVGQKVDVQGTSIGKGFAGTIKRHNFGSQRASHGNSRSHNVPGSIGMAQDPGRVFPGKKMTGHLGDVTVTTQNLDVVRIDEARQLLLIKGAVPGSKGGFVTVRPAVKAQASKGAN.

An N5-methylglutamine modification is found at Gln-158.

The protein belongs to the universal ribosomal protein uL3 family. In terms of assembly, part of the 50S ribosomal subunit. Forms a cluster with proteins L14 and L19. Methylated by PrmB.

Functionally, one of the primary rRNA binding proteins, it binds directly near the 3'-end of the 23S rRNA, where it nucleates assembly of the 50S subunit. The polypeptide is Large ribosomal subunit protein uL3 (Acidovorax sp. (strain JS42)).